The primary structure comprises 207 residues: Cytochrome c biogenesis ATP-binding export protein CcmA (207 aa).

Residues 4–207 (LEARELLCER…RISLTQTRAA (204 aa)) enclose the ABC transporter domain. 36–43 (GSNGAGKT) contacts ATP.

Belongs to the ABC transporter superfamily. CcmA exporter (TC 3.A.1.107) family. The complex is composed of two ATP-binding proteins (CcmA) and two transmembrane proteins (CcmB).

Its subcellular location is the cell inner membrane. The catalysed reaction is heme b(in) + ATP + H2O = heme b(out) + ADP + phosphate + H(+). Its function is as follows. Part of the ABC transporter complex CcmAB involved in the biogenesis of c-type cytochromes; once thought to export heme, this seems not to be the case, but its exact role is uncertain. Responsible for energy coupling to the transport system. In Shigella flexneri, this protein is Cytochrome c biogenesis ATP-binding export protein CcmA.